A 258-amino-acid chain; its full sequence is Adenosylcobinamide-GDP ribazoletransferase (258 aa).

6 helical membrane passes run phenylalanine 41–serine 61, proline 65–phenylalanine 85, isoleucine 115–methionine 135, alanine 136–serine 156, leucine 197–alanine 217, and cysteine 236–threonine 256.

The protein belongs to the CobS family. The cofactor is Mg(2+).

It is found in the cell inner membrane. It carries out the reaction alpha-ribazole + adenosylcob(III)inamide-GDP = adenosylcob(III)alamin + GMP + H(+). The catalysed reaction is alpha-ribazole 5'-phosphate + adenosylcob(III)inamide-GDP = adenosylcob(III)alamin 5'-phosphate + GMP + H(+). It participates in cofactor biosynthesis; adenosylcobalamin biosynthesis; adenosylcobalamin from cob(II)yrinate a,c-diamide: step 7/7. Its function is as follows. Joins adenosylcobinamide-GDP and alpha-ribazole to generate adenosylcobalamin (Ado-cobalamin). Also synthesizes adenosylcobalamin 5'-phosphate from adenosylcobinamide-GDP and alpha-ribazole 5'-phosphate. The protein is Adenosylcobinamide-GDP ribazoletransferase of Ralstonia nicotianae (strain ATCC BAA-1114 / GMI1000) (Ralstonia solanacearum).